The primary structure comprises 415 residues: PRKCA-binding protein (415 aa).

The PDZ domain maps to 22–105 (KVTLQKDAQN…EVTIHYNKLQ (84 aa)). Zn(2+)-binding residues include C44 and C46. T82 bears the Phosphothreonine mark. The AH domain maps to 144 to 357 (LCNDGLVKRL…CYAVLRDADV (214 aa)). The disordered stretch occupies residues 376–415 (EEFTDGEEEEEEEDTAAGEPARDTRGAAGPLDKGGSWCDS). Over residues 377 to 391 (EFTDGEEEEEEEDTA) the composition is skewed to acidic residues. C413 carries S-palmitoyl cysteine; by DHHC8 lipidation.

As to quaternary structure, monomer and homodimer. Interacts with CXADR. Interacts presynaptically with the glutamate receptors GRIA2, GRIA3, GRIK3, isoform 3 of GRIA4, isoform A of GRM4, GRM7 and GRM8; with NAPA and NAPB; and with BTG2. The interaction with NAPA and NAPB disrupts the interaction with GRIA2, conducting to the internalization of GRIA2. Interacts with PRKCA; with the amine transporters SLC6A2 and SLC6A3; with the channels ASIC1 and ASIC2; with the GTP-binding proteins ARF1 and ARF3; with the ephrin receptor tyrosine kinases EPHA7, EPHB1 and EPHB2; with ERBB2 and through its PDZ domain with the C-terminal tail of PRLHR. Interacts with UNC5A. Interacts (via AH domain) with NCS1/FREQ; in a calcium-dependent manner. Interacts with F-actin and associates with the ARP2/3 complex. Interacts (via PDZ domain) with ARF1 (activated); the interaction blocks Arp2/3 complex inhibition. Interacts with SORCS3. In terms of processing, phosphorylation at Thr-82 appears to inhibit the interaction with AMPA receptors. Palmitoylation on Cys-413 is essential for long-term synaptic depression (LTD).

The protein resides in the cytoplasm. It localises to the perinuclear region. The protein localises to the membrane. Its subcellular location is the postsynaptic density. It is found in the synapse. The protein resides in the synaptosome. It localises to the cytoskeleton. Its function is as follows. Probable adapter protein that bind to and organize the subcellular localization of a variety of membrane proteins containing some PDZ recognition sequence. Involved in the clustering of various receptors, possibly by acting at the receptor internalization level. Plays a role in synaptic plasticity by regulating the trafficking and internalization of AMPA receptors. May be regulated upon PRKCA activation. May regulate ASIC1/ASIC3 channel. Regulates actin polymerization by inhibiting the actin-nucleating activity of the Arp2/3 complex; the function is competitive with nucleation promoting factors and is linked to neuronal morphology regulation and AMPA receptor (AMPAR) endocytosis. Via interaction with the Arp2/3 complex involved in regulation of synaptic plasicity of excitatory synapses and required for spine shrinkage during long-term depression (LTD). Involved in regulation of astrocyte morphology, antagonistic to Arp2/3 complex activator WASL/N-WASP function. In Pongo abelii (Sumatran orangutan), this protein is PRKCA-binding protein (PICK1).